The chain runs to 242 residues: Zinc import ATP-binding protein ZnuC (242 aa).

The ABC transporter domain maps to 24 to 241 (INVKNLSFFY…EKFLKMFSSY (218 aa)). 56 to 63 (GPNGGGKT) is an ATP binding site.

The protein belongs to the ABC transporter superfamily. Zinc importer (TC 3.A.1.15.5) family. As to quaternary structure, the complex is composed of two ATP-binding proteins (ZnuC), two transmembrane proteins (ZnuB) and a solute-binding protein (ZnuA).

It localises to the cell inner membrane. The enzyme catalyses Zn(2+)(out) + ATP(in) + H2O(in) = Zn(2+)(in) + ADP(in) + phosphate(in) + H(+)(in). Its function is as follows. Part of the ABC transporter complex ZnuABC involved in zinc import. Responsible for energy coupling to the transport system. The chain is Zinc import ATP-binding protein ZnuC from Ehrlichia canis (strain Jake).